Here is a 691-residue protein sequence, read N- to C-terminus: Elongation factor G (691 aa).

The tr-type G domain occupies 8–283; sequence DMQRNIGIMA…AVVDFLPSPV (276 aa). GTP-binding positions include 17-24, 81-85, and 135-138; these read AHIDAGKT, DTPGH, and NKMD.

The protein belongs to the TRAFAC class translation factor GTPase superfamily. Classic translation factor GTPase family. EF-G/EF-2 subfamily.

The protein localises to the cytoplasm. Functionally, catalyzes the GTP-dependent ribosomal translocation step during translation elongation. During this step, the ribosome changes from the pre-translocational (PRE) to the post-translocational (POST) state as the newly formed A-site-bound peptidyl-tRNA and P-site-bound deacylated tRNA move to the P and E sites, respectively. Catalyzes the coordinated movement of the two tRNA molecules, the mRNA and conformational changes in the ribosome. This chain is Elongation factor G, found in Nitratidesulfovibrio vulgaris (strain ATCC 29579 / DSM 644 / CCUG 34227 / NCIMB 8303 / VKM B-1760 / Hildenborough) (Desulfovibrio vulgaris).